Consider the following 222-residue polypeptide: Histidine biosynthesis bifunctional protein HisIE (222 aa).

The interval 1 to 128 (MQPLSPAFID…SLTLPPPMDA (128 aa)) is phosphoribosyl-AMP cyclohydrolase. A phosphoribosyl-ATP pyrophosphohydrolase region spans residues 129–222 (CSELFRVIDQ…ANRRGAPRRN (94 aa)).

This sequence in the N-terminal section; belongs to the PRA-CH family. It in the C-terminal section; belongs to the PRA-PH family.

It is found in the cytoplasm. The enzyme catalyses 1-(5-phospho-beta-D-ribosyl)-ATP + H2O = 1-(5-phospho-beta-D-ribosyl)-5'-AMP + diphosphate + H(+). It catalyses the reaction 1-(5-phospho-beta-D-ribosyl)-5'-AMP + H2O = 1-(5-phospho-beta-D-ribosyl)-5-[(5-phospho-beta-D-ribosylamino)methylideneamino]imidazole-4-carboxamide. The protein operates within amino-acid biosynthesis; L-histidine biosynthesis; L-histidine from 5-phospho-alpha-D-ribose 1-diphosphate: step 2/9. Its pathway is amino-acid biosynthesis; L-histidine biosynthesis; L-histidine from 5-phospho-alpha-D-ribose 1-diphosphate: step 3/9. The protein is Histidine biosynthesis bifunctional protein HisIE of Prochlorococcus marinus (strain MIT 9313).